Here is a 184-residue protein sequence, read N- to C-terminus: NADH-quinone oxidoreductase subunit B (184 aa).

Residues C37, C38, C103, and C132 each contribute to the [4Fe-4S] cluster site.

It belongs to the complex I 20 kDa subunit family. As to quaternary structure, NDH-1 is composed of 14 different subunits. Subunits NuoB, C, D, E, F, and G constitute the peripheral sector of the complex. Requires [4Fe-4S] cluster as cofactor.

Its subcellular location is the cell membrane. It catalyses the reaction a quinone + NADH + 5 H(+)(in) = a quinol + NAD(+) + 4 H(+)(out). In terms of biological role, NDH-1 shuttles electrons from NADH, via FMN and iron-sulfur (Fe-S) centers, to quinones in the respiratory chain. The immediate electron acceptor for the enzyme in this species is believed to be a menaquinone. Couples the redox reaction to proton translocation (for every two electrons transferred, four hydrogen ions are translocated across the cytoplasmic membrane), and thus conserves the redox energy in a proton gradient. The protein is NADH-quinone oxidoreductase subunit B of Mycobacterium bovis (strain BCG / Pasteur 1173P2).